The chain runs to 700 residues: Phenoloxidase 8 (700 aa).

The propeptide occupies 1 to 51 (MATLTQKFHGLLQHPLEPLFLPKNDGTLFYDLPERFLTSRYSPIGQNLANR). Residues Asn-64 and Asn-198 are each glycosylated (N-linked (GlcNAc...) asparagine). Cu cation contacts are provided by His-223, His-227, and His-252. N-linked (GlcNAc...) asparagine glycosylation is present at Asn-295. The Proton acceptor role is filled by Glu-364. 3 residues coordinate Cu cation: His-379, His-383, and His-419. N-linked (GlcNAc...) asparagine glycans are attached at residues Asn-445, Asn-507, and Asn-565. Intrachain disulfides connect Cys-592–Cys-636 and Cys-594–Cys-643.

The protein belongs to the tyrosinase family. Homodimer. The cofactor is Cu(2+). Post-translationally, upon activation, a trypsin type protease cleaves prophenol oxidase to yield the active enzyme.

It is found in the secreted. The enzyme catalyses 2 tyramine + O2 = 2 dopamine. The catalysed reaction is 2 dopamine + O2 = 2 dopamine quinone + 2 H2O. In terms of biological role, this is a copper-containing oxidase that functions in the formation of pigments such as melanins and other polyphenolic compounds. Catalyzes the oxidation of o-diphenols such as dopamine. Also oxidizes monophenols such as tyramine. This chain is Phenoloxidase 8, found in Anopheles gambiae (African malaria mosquito).